Consider the following 203-residue polypeptide: LexA repressor (203 aa).

The segment at residues 28–47 is a DNA-binding region (H-T-H motif); sequence IREIGDEFGITAKGAYDHLK. Active-site for autocatalytic cleavage activity residues include Ser127 and Lys164.

This sequence belongs to the peptidase S24 family. As to quaternary structure, homodimer.

It carries out the reaction Hydrolysis of Ala-|-Gly bond in repressor LexA.. Its function is as follows. Represses a number of genes involved in the response to DNA damage (SOS response), including recA and lexA. In the presence of single-stranded DNA, RecA interacts with LexA causing an autocatalytic cleavage which disrupts the DNA-binding part of LexA, leading to derepression of the SOS regulon and eventually DNA repair. The sequence is that of LexA repressor from Leptospira interrogans serogroup Icterohaemorrhagiae serovar copenhageni (strain Fiocruz L1-130).